A 373-amino-acid polypeptide reads, in one-letter code: Erythronate-4-phosphate dehydrogenase (373 aa).

Substrate is bound by residues serine 45 and threonine 66. Residues aspartate 146 and threonine 173 each contribute to the NAD(+) site. Residue arginine 206 is part of the active site. Aspartate 230 lines the NAD(+) pocket. Residue glutamate 235 is part of the active site. The Proton donor role is filled by histidine 252. Position 255 (glycine 255) interacts with NAD(+). Substrate is bound at residue tyrosine 256.

This sequence belongs to the D-isomer specific 2-hydroxyacid dehydrogenase family. PdxB subfamily. As to quaternary structure, homodimer.

The protein localises to the cytoplasm. The catalysed reaction is 4-phospho-D-erythronate + NAD(+) = (R)-3-hydroxy-2-oxo-4-phosphooxybutanoate + NADH + H(+). It functions in the pathway cofactor biosynthesis; pyridoxine 5'-phosphate biosynthesis; pyridoxine 5'-phosphate from D-erythrose 4-phosphate: step 2/5. Catalyzes the oxidation of erythronate-4-phosphate to 3-hydroxy-2-oxo-4-phosphonooxybutanoate. This is Erythronate-4-phosphate dehydrogenase from Saccharophagus degradans (strain 2-40 / ATCC 43961 / DSM 17024).